The chain runs to 602 residues: Elongation factor 4 (602 aa).

The region spanning 7–189 is the tr-type G domain; it reads SRLRNFCIIA…AVVERVPPPK (183 aa). GTP-binding positions include 19–24 and 136–139; these read DHGKST and NKVD.

It belongs to the TRAFAC class translation factor GTPase superfamily. Classic translation factor GTPase family. LepA subfamily.

It is found in the cell inner membrane. The enzyme catalyses GTP + H2O = GDP + phosphate + H(+). Required for accurate and efficient protein synthesis under certain stress conditions. May act as a fidelity factor of the translation reaction, by catalyzing a one-codon backward translocation of tRNAs on improperly translocated ribosomes. Back-translocation proceeds from a post-translocation (POST) complex to a pre-translocation (PRE) complex, thus giving elongation factor G a second chance to translocate the tRNAs correctly. Binds to ribosomes in a GTP-dependent manner. This chain is Elongation factor 4, found in Prochlorococcus marinus (strain MIT 9211).